We begin with the raw amino-acid sequence, 101 residues long: NAD(P)H-quinone oxidoreductase subunit 4L, chloroplastic (101 aa).

Helical transmembrane passes span 2-22 (MLEH…YGLI), 32-52 (MCLE…SDLF), and 61-81 (VFSI…PAIV).

It belongs to the complex I subunit 4L family. NDH is composed of at least 16 different subunits, 5 of which are encoded in the nucleus.

The protein localises to the plastid. Its subcellular location is the chloroplast thylakoid membrane. It catalyses the reaction a plastoquinone + NADH + (n+1) H(+)(in) = a plastoquinol + NAD(+) + n H(+)(out). It carries out the reaction a plastoquinone + NADPH + (n+1) H(+)(in) = a plastoquinol + NADP(+) + n H(+)(out). Functionally, NDH shuttles electrons from NAD(P)H:plastoquinone, via FMN and iron-sulfur (Fe-S) centers, to quinones in the photosynthetic chain and possibly in a chloroplast respiratory chain. The immediate electron acceptor for the enzyme in this species is believed to be plastoquinone. Couples the redox reaction to proton translocation, and thus conserves the redox energy in a proton gradient. The polypeptide is NAD(P)H-quinone oxidoreductase subunit 4L, chloroplastic (Nuphar advena (Common spatterdock)).